The following is a 232-amino-acid chain: Lipoarabinomannan carrier protein LprG (232 aa).

The first 21 residues, 1–21 (MQTRLTAILAAFLTAVALLAG), serve as a signal peptide directing secretion. Residue Cys-22 is the site of N-palmitoyl cysteine attachment. Cys-22 carries the S-diacylglycerol cysteine lipid modification.

Belongs to the LppX/LprAFG lipoprotein family. In terms of processing, modified by Lgt on Cys-22 with an S-linked diacylglyceral, signal peptide is removed by LspA, Cys-22 is further modifed with a fatty acid on its amino group by Lnt yielding a triacylated protein.

Its subcellular location is the cell inner membrane. Functionally, helps membrane protein MHAS_02168/C731_2106 (P55) transport triacylglycerides (TAG) across the inner cell membrane into the periplasm and probably ultimately to the outer membrane. Binds TAG in its hydrophobic cavity and transfers it between lipid bilayers. TAG probably regulates lipid metabolism and growth regulation and plays a structural role in the outer membrane. Also binds mannosides, lipoarabinomannan and lipomannan and various glycolipids in the same cavity. The lprG-MHAS_02167/C731_2107 operon complements the vancomycin sensitivity of an M.smegmatis knockout of the same operon. This chain is Lipoarabinomannan carrier protein LprG, found in Mycolicibacterium hassiacum (strain DSM 44199 / CIP 105218 / JCM 12690 / 3849) (Mycobacterium hassiacum).